A 161-amino-acid polypeptide reads, in one-letter code: SsrA-binding protein (161 aa).

Belongs to the SmpB family.

It localises to the cytoplasm. Functionally, required for rescue of stalled ribosomes mediated by trans-translation. Binds to transfer-messenger RNA (tmRNA), required for stable association of tmRNA with ribosomes. tmRNA and SmpB together mimic tRNA shape, replacing the anticodon stem-loop with SmpB. tmRNA is encoded by the ssrA gene; the 2 termini fold to resemble tRNA(Ala) and it encodes a 'tag peptide', a short internal open reading frame. During trans-translation Ala-aminoacylated tmRNA acts like a tRNA, entering the A-site of stalled ribosomes, displacing the stalled mRNA. The ribosome then switches to translate the ORF on the tmRNA; the nascent peptide is terminated with the 'tag peptide' encoded by the tmRNA and targeted for degradation. The ribosome is freed to recommence translation, which seems to be the essential function of trans-translation. The polypeptide is SsrA-binding protein (Baumannia cicadellinicola subsp. Homalodisca coagulata).